The primary structure comprises 144 residues: Deoxyuridine 5'-triphosphate nucleotidohydrolase (144 aa).

Residues 63 to 65 (RSG), Asn76, and 80 to 82 (TID) contribute to the substrate site.

It belongs to the dUTPase family. Mg(2+) serves as cofactor.

The catalysed reaction is dUTP + H2O = dUMP + diphosphate + H(+). It participates in pyrimidine metabolism; dUMP biosynthesis; dUMP from dCTP (dUTP route): step 2/2. In terms of biological role, this enzyme is involved in nucleotide metabolism: it produces dUMP, the immediate precursor of thymidine nucleotides and it decreases the intracellular concentration of dUTP so that uracil cannot be incorporated into DNA. The chain is Deoxyuridine 5'-triphosphate nucleotidohydrolase from Bacteroides fragilis (strain YCH46).